Consider the following 294-residue polypeptide: Protoheme IX farnesyltransferase (294 aa).

Transmembrane regions (helical) follow at residues 22-42, 46-66, 89-109, 116-136, 143-163, 170-190, 212-232, 234-254, and 272-292; these read VTQL…PELP, IVVA…AINC, ITVP…MWVL, LTMW…TIIL, NIVI…AAVA, AWIL…ALAL, FTQF…MLPF, VGMS…IFVW, and FAYS…DHYL.

Belongs to the UbiA prenyltransferase family. Protoheme IX farnesyltransferase subfamily.

The protein localises to the cell inner membrane. The catalysed reaction is heme b + (2E,6E)-farnesyl diphosphate + H2O = Fe(II)-heme o + diphosphate. Its pathway is porphyrin-containing compound metabolism; heme O biosynthesis; heme O from protoheme: step 1/1. In terms of biological role, converts heme B (protoheme IX) to heme O by substitution of the vinyl group on carbon 2 of heme B porphyrin ring with a hydroxyethyl farnesyl side group. The sequence is that of Protoheme IX farnesyltransferase from Janthinobacterium sp. (strain Marseille) (Minibacterium massiliensis).